The following is a 259-amino-acid chain: 5'-nucleotidase SurE (259 aa).

A divalent metal cation is bound by residues D8, D9, S39, and N93.

This sequence belongs to the SurE nucleotidase family. Requires a divalent metal cation as cofactor.

Its subcellular location is the cytoplasm. The enzyme catalyses a ribonucleoside 5'-phosphate + H2O = a ribonucleoside + phosphate. In terms of biological role, nucleotidase that shows phosphatase activity on nucleoside 5'-monophosphates. The chain is 5'-nucleotidase SurE from Thermococcus kodakarensis (strain ATCC BAA-918 / JCM 12380 / KOD1) (Pyrococcus kodakaraensis (strain KOD1)).